An 885-amino-acid polypeptide reads, in one-letter code: Translation initiation factor IF-2 (885 aa).

2 disordered regions span residues 55–150 (IPDK…ADVT) and 269–300 (NTIN…EAVT). The span at 65–146 (EPKAKKEPKK…AEAPKPKESL (82 aa)) shows a compositional bias: basic and acidic residues. Positions 281-290 (RRARKKHKKP) are enriched in basic residues. In terms of domain architecture, tr-type G spans 384 to 553 (PRAPVITIMG…LLQADLLELK (170 aa)). A G1 region spans residues 393 to 400 (GHVDHGKT). 393–400 (GHVDHGKT) contributes to the GTP binding site. A G2 region spans residues 418 to 422 (GITQH). The tract at residues 439 to 442 (DTPG) is G3. GTP is bound by residues 439 to 443 (DTPGH) and 493 to 496 (NKMD). Residues 493 to 496 (NKMD) are G4. Residues 529-531 (SAK) form a G5 region.

This sequence belongs to the TRAFAC class translation factor GTPase superfamily. Classic translation factor GTPase family. IF-2 subfamily.

Its subcellular location is the cytoplasm. Functionally, one of the essential components for the initiation of protein synthesis. Protects formylmethionyl-tRNA from spontaneous hydrolysis and promotes its binding to the 30S ribosomal subunits. Also involved in the hydrolysis of GTP during the formation of the 70S ribosomal complex. The sequence is that of Translation initiation factor IF-2 from Campylobacter concisus (strain 13826).